The chain runs to 273 residues: Patr class II histocompatibility antigen, DO beta chain (273 aa).

A signal peptide spans 1 to 26; sequence MGSGWVPWVVALLVNLTRLDSSMTQG. The tract at residues 27–120 is beta-1; the sequence is TDSPEDFVIQ…LGAPFTVGRK (94 aa). Residues 27 to 224 are Extracellular-facing; sequence TDSPEDFVIQ…RAQSEYSWKK (198 aa). Disulfide bonds link C41/C105 and C143/C199. N45 carries an N-linked (GlcNAc...) asparagine glycan. A beta-2 region spans residues 121-214; sequence VQPEVTVYPE…SLLSPVSVEW (94 aa). The region spanning 123–213 is the Ig-like C1-type domain; that stretch reads PEVTVYPERT…SSLLSPVSVE (91 aa). The connecting peptide stretch occupies residues 215–224; it reads RAQSEYSWKK. Residues 225–245 traverse the membrane as a helical segment; it reads MLSGIAAFLLGLIFLLVGIVI. The Cytoplasmic portion of the chain corresponds to 246-273; sequence QLRAQKGYVRTQMSGNEVSRAVLLPQSC.

The protein belongs to the MHC class II family. Heterodimer of an alpha chain (DOA) and a beta chain (DOB). Forms a heterotetrameric complex with an HLA-DM molecule during intracellular transport in endosomal/lysosomal compartments in B-cells.

It is found in the endosome membrane. It localises to the lysosome membrane. In terms of biological role, important modulator in the HLA class II restricted antigen presentation pathway by interaction with the HLA-DM molecule in B-cells. Modifies peptide exchange activity of HLA-DM. The protein is Patr class II histocompatibility antigen, DO beta chain (Patr-DOB) of Pan troglodytes (Chimpanzee).